Consider the following 275-residue polypeptide: MRGEGIRARKALGQNFLVDRHVLARIADIVDMRPDDRILEVGPGKGALTEMLAHRCARLVAVELDTRLVPVLRQAFRDNPRVEIVHGDILEIDLRDLLAYEGGERWKVAANLPYNISTPVLFAFLDNRDLFSRLVLMLQKEVGDRLAASPGTKDYGILSVFFQLHFDVTREMIVRPGSFHPVPKVDSAVLSFVPLEKPRVAVGDEQYFRRLVKGAFSMRRKTLWNCLKNAGLGLSGEQLSEALAVCGIEPGRRGETLSLDEFAALSRAMMALGGK.

Residues Asn-15, Leu-17, Gly-42, Glu-63, Asp-88, and Asn-111 each coordinate S-adenosyl-L-methionine.

This sequence belongs to the class I-like SAM-binding methyltransferase superfamily. rRNA adenine N(6)-methyltransferase family. RsmA subfamily.

The protein resides in the cytoplasm. The catalysed reaction is adenosine(1518)/adenosine(1519) in 16S rRNA + 4 S-adenosyl-L-methionine = N(6)-dimethyladenosine(1518)/N(6)-dimethyladenosine(1519) in 16S rRNA + 4 S-adenosyl-L-homocysteine + 4 H(+). Functionally, specifically dimethylates two adjacent adenosines (A1518 and A1519) in the loop of a conserved hairpin near the 3'-end of 16S rRNA in the 30S particle. May play a critical role in biogenesis of 30S subunits. This is Ribosomal RNA small subunit methyltransferase A from Geobacter metallireducens (strain ATCC 53774 / DSM 7210 / GS-15).